Here is a 67-residue protein sequence, read N- to C-terminus: Penaeidin-4d (67 aa).

Residues 1-19 form the signal peptide; sequence MRLLVCLVFLASFAMVCQG. 3 disulfides stabilise this stretch: cysteine 42–cysteine 56, cysteine 45–cysteine 63, and cysteine 57–cysteine 64. Leucine amide is present on leucine 66.

Belongs to the penaeidin family.

The protein localises to the cytoplasmic granule. In terms of biological role, antibacterial and antifungal activity. Presents chitin-binding activity. The sequence is that of Penaeidin-4d from Penaeus setiferus (Atlantic white shrimp).